The primary structure comprises 518 residues: 2-isopropylmalate synthase (518 aa).

Residues I4–K266 form the Pyruvate carboxyltransferase domain. Mn(2+) contacts are provided by D13, H201, H203, and N237. The segment at D391–S518 is regulatory domain.

The protein belongs to the alpha-IPM synthase/homocitrate synthase family. LeuA type 1 subfamily. Homodimer. It depends on Mn(2+) as a cofactor.

The protein resides in the cytoplasm. The enzyme catalyses 3-methyl-2-oxobutanoate + acetyl-CoA + H2O = (2S)-2-isopropylmalate + CoA + H(+). The protein operates within amino-acid biosynthesis; L-leucine biosynthesis; L-leucine from 3-methyl-2-oxobutanoate: step 1/4. Its function is as follows. Catalyzes the condensation of the acetyl group of acetyl-CoA with 3-methyl-2-oxobutanoate (2-ketoisovalerate) to form 3-carboxy-3-hydroxy-4-methylpentanoate (2-isopropylmalate). The sequence is that of 2-isopropylmalate synthase from Bacillus licheniformis (strain ATCC 14580 / DSM 13 / JCM 2505 / CCUG 7422 / NBRC 12200 / NCIMB 9375 / NCTC 10341 / NRRL NRS-1264 / Gibson 46).